A 511-amino-acid chain; its full sequence is ESX-1 secretion system protein EccD1 (511 aa).

N-acetylserine is present on serine 2. Topologically, residues 2–143 are cytoplasmic; sequence SAPAVAAGPT…PEFDRTALNR (142 aa). A helical transmembrane segment spans residues 144–164; it reads FVGAAIPLLTAPVIGMAMRAW. Residues 165–170 are Periplasmic-facing; that stretch reads WETGRS. The chain crosses the membrane as a helical span at residues 171–191; the sequence is LWWPLAIGILGIAVLVGSFVA. Residues 192-202 lie on the Cytoplasmic side of the membrane; that stretch reads NRFYQSGHLAE. A helical transmembrane segment spans residues 203–223; sequence CLLVTTYLLIATAAALAVPLP. The Periplasmic segment spans residues 224–227; sequence RGVN. The chain crosses the membrane as a helical span at residues 228-248; it reads SLGAPQVAGAATAVLFLTLMT. Residues 249–257 lie on the Cytoplasmic side of the membrane; the sequence is RGGPRKRHE. A helical membrane pass occupies residues 258–278; that stretch reads LASFAVITAIAVIAAAAAFGY. Over 279–285 the chain is Periplasmic; that stretch reads GYQDWVP. The helical transmembrane segment at 286 to 306 threads the bilayer; sequence AGGIAFGLFIVTNAAKLTVAV. The Cytoplasmic segment spans residues 307 to 367; the sequence is ARIALPPIPV…TERSKLAKQL (61 aa). The next 2 membrane-spanning stretches (helical) occupy residues 368-388 and 389-409; these read LIGY…AVVV and RGHF…VCGF. The Cytoplasmic portion of the chain corresponds to 410–420; sequence RSRLYAERWCA. The chain crosses the membrane as a helical span at residues 421 to 441; it reads WALLAATVAIPTGLTAKLIIW. The Periplasmic portion of the chain corresponds to 442–444; that stretch reads YPH. Residues 445–465 traverse the membrane as a helical segment; the sequence is YAWLLLSVYLTVALVALVVVG. Over 466–482 the chain is Cytoplasmic; the sequence is SMAHVRRVSPVVKRTLE. Residues 483-503 traverse the membrane as a helical segment; it reads LIDGAMIAAIIPMLLWITGVY. Over 504 to 511 the chain is Periplasmic; sequence DTVRNIRF.

It belongs to the EccD/Snm4 family. As to quaternary structure, possibly a homodimer. Part of the ESX-1 / type VII secretion system (T7SS), which is composed of cytosolic and membrane components. The ESX-1 membrane complex is composed of EccB1, EccCa1, EccCb1, EccD1 and EccE1.

It is found in the cell inner membrane. Part of the ESX-1 specialized secretion system, which delivers several virulence factors to host cells during infection, including the key virulence factors EsxA (ESAT-6) and EsxB (CFP-10). The chain is ESX-1 secretion system protein EccD1 from Mycobacterium tuberculosis (strain ATCC 25618 / H37Rv).